A 475-amino-acid chain; its full sequence is tRNA-2-methylthio-N(6)-dimethylallyladenosine synthase (475 aa).

The 118-residue stretch at 2–119 (AKLHITTWGC…LPEMINKIRG (118 aa)) folds into the MTTase N-terminal domain. [4Fe-4S] cluster-binding residues include Cys11, Cys48, Cys82, Cys156, Cys160, and Cys163. The Radical SAM core domain occupies 142 to 374 (RAEGPTAFVS…QQRINHQAMQ (233 aa)). Positions 377–440 (RAMLGTEQRV…TNSLRGEVVR (64 aa)) constitute a TRAM domain.

It belongs to the methylthiotransferase family. MiaB subfamily. In terms of assembly, monomer. The cofactor is [4Fe-4S] cluster.

It is found in the cytoplasm. The catalysed reaction is N(6)-dimethylallyladenosine(37) in tRNA + (sulfur carrier)-SH + AH2 + 2 S-adenosyl-L-methionine = 2-methylsulfanyl-N(6)-dimethylallyladenosine(37) in tRNA + (sulfur carrier)-H + 5'-deoxyadenosine + L-methionine + A + S-adenosyl-L-homocysteine + 2 H(+). Its function is as follows. Catalyzes the methylthiolation of N6-(dimethylallyl)adenosine (i(6)A), leading to the formation of 2-methylthio-N6-(dimethylallyl)adenosine (ms(2)i(6)A) at position 37 in tRNAs that read codons beginning with uridine. The sequence is that of tRNA-2-methylthio-N(6)-dimethylallyladenosine synthase from Actinobacillus pleuropneumoniae serotype 3 (strain JL03).